Consider the following 187-residue polypeptide: UPF0232 protein Mb0004 (187 aa).

Composition is skewed to basic and acidic residues over residues 1-17 (MTGS…ERLM) and 35-45 (AARARGQDAGR). 3 disordered regions span residues 1 to 23 (MTGS…PGLD), 35 to 75 (AARA…DPQP), and 168 to 187 (PSWR…DTYG).

This sequence belongs to the UPF0232 family.

The protein is UPF0232 protein Mb0004 of Mycobacterium bovis (strain ATCC BAA-935 / AF2122/97).